The chain runs to 812 residues: ATP-dependent DNA helicase PIF3 (812 aa).

Residue 247–254 participates in ATP binding; that stretch reads GSAGTGKT. Residues 741–761 mediate DNA binding; it reads HLVYVACSRVRSMDQLIVRNV.

This sequence belongs to the helicase family. PIF1 subfamily. As to quaternary structure, monomer. Mg(2+) serves as cofactor.

The protein resides in the cytoplasm. It catalyses the reaction Couples ATP hydrolysis with the unwinding of duplex DNA at the replication fork by translocating in the 5'-3' direction. This creates two antiparallel DNA single strands (ssDNA). The leading ssDNA polymer is the template for DNA polymerase III holoenzyme which synthesizes a continuous strand.. The catalysed reaction is ATP + H2O = ADP + phosphate + H(+). Its function is as follows. DNA-dependent ATPase and 5'-3' DNA helicase required for the maintenance of genome stability. The polypeptide is ATP-dependent DNA helicase PIF3 (Trypanosoma brucei brucei (strain 927/4 GUTat10.1)).